A 299-amino-acid chain; its full sequence is tRNA dimethylallyltransferase 2 (299 aa).

ATP is bound at residue 9–16 (GPTGVGKT). 11-16 (TGVGKT) contributes to the substrate binding site. Residues 34-37 (DSRQ) are interaction with substrate tRNA.

This sequence belongs to the IPP transferase family. As to quaternary structure, monomer. Mg(2+) serves as cofactor.

It catalyses the reaction adenosine(37) in tRNA + dimethylallyl diphosphate = N(6)-dimethylallyladenosine(37) in tRNA + diphosphate. Its function is as follows. Catalyzes the transfer of a dimethylallyl group onto the adenine at position 37 in tRNAs that read codons beginning with uridine, leading to the formation of N6-(dimethylallyl)adenosine (i(6)A). This Parabacteroides distasonis (strain ATCC 8503 / DSM 20701 / CIP 104284 / JCM 5825 / NCTC 11152) protein is tRNA dimethylallyltransferase 2.